An 82-amino-acid polypeptide reads, in one-letter code: ATP synthase subunit c, chloroplastic (82 aa).

2 helical membrane passes run 3 to 23 and 57 to 77; these read PIVAAASVVSAGLAVGLAAIG and FAFMESLTIYGLVVALALLFA.

This sequence belongs to the ATPase C chain family. In terms of assembly, F-type ATPases have 2 components, F(1) - the catalytic core - and F(0) - the membrane proton channel. F(1) has five subunits: alpha(3), beta(3), gamma(1), delta(1), epsilon(1). F(0) has four main subunits: a(1), b(1), b'(1) and c(10-14). The alpha and beta chains form an alternating ring which encloses part of the gamma chain. F(1) is attached to F(0) by a central stalk formed by the gamma and epsilon chains, while a peripheral stalk is formed by the delta, b and b' chains.

It localises to the plastid. The protein localises to the chloroplast thylakoid membrane. In terms of biological role, f(1)F(0) ATP synthase produces ATP from ADP in the presence of a proton or sodium gradient. F-type ATPases consist of two structural domains, F(1) containing the extramembraneous catalytic core and F(0) containing the membrane proton channel, linked together by a central stalk and a peripheral stalk. During catalysis, ATP synthesis in the catalytic domain of F(1) is coupled via a rotary mechanism of the central stalk subunits to proton translocation. Its function is as follows. Key component of the F(0) channel; it plays a direct role in translocation across the membrane. A homomeric c-ring of between 10-14 subunits forms the central stalk rotor element with the F(1) delta and epsilon subunits. The chain is ATP synthase subunit c, chloroplastic from Tetradesmus obliquus (Green alga).